A 128-amino-acid polypeptide reads, in one-letter code: Flagellar basal body rod protein FlgB (128 aa).

This sequence belongs to the flagella basal body rod proteins family. As to quaternary structure, the basal body constitutes a major portion of the flagellar organelle and consists of a number of rings mounted on a central rod. In Gram-negative bacteria, at least four rings, L, P, S and M are present, whereas Gram-positive bacteria lack the L and P rings. The rod consists of about 26 subunits of FlgG in the distal portion, and FlgB, FlgC and FlgF build up the proximal portion of the rod with about 6 subunits each. Rod assembly occurs by export via the flagellum-specific pathway of its constituent proteins and by their incorporation into the rod structure in the probable order of FlgB, FlgC, FlgF and FlgG. Another protein, FliE, also assembles onto the stable rod structure.

It is found in the bacterial flagellum basal body. Structural component of flagellum, the bacterial motility apparatus. Part of the rod structure of flagellar basal body. This chain is Flagellar basal body rod protein FlgB, found in Cereibacter sphaeroides (strain ATCC 17029 / ATH 2.4.9) (Rhodobacter sphaeroides).